Consider the following 409-residue polypeptide: UDP-N-acetylglucosamine--N-acetylmuramyl-(pentapeptide) pyrophosphoryl-undecaprenol N-acetylglucosamine transferase (409 aa).

Residues 11-13 (TGG), N125, R169, S199, and Q299 each bind UDP-N-acetyl-alpha-D-glucosamine.

It belongs to the glycosyltransferase 28 family. MurG subfamily.

Its subcellular location is the cell membrane. The catalysed reaction is di-trans,octa-cis-undecaprenyl diphospho-N-acetyl-alpha-D-muramoyl-L-alanyl-D-glutamyl-meso-2,6-diaminopimeloyl-D-alanyl-D-alanine + UDP-N-acetyl-alpha-D-glucosamine = di-trans,octa-cis-undecaprenyl diphospho-[N-acetyl-alpha-D-glucosaminyl-(1-&gt;4)]-N-acetyl-alpha-D-muramoyl-L-alanyl-D-glutamyl-meso-2,6-diaminopimeloyl-D-alanyl-D-alanine + UDP + H(+). The protein operates within cell wall biogenesis; peptidoglycan biosynthesis. In terms of biological role, cell wall formation. Catalyzes the transfer of a GlcNAc subunit on undecaprenyl-pyrophosphoryl-MurNAc-pentapeptide (lipid intermediate I) to form undecaprenyl-pyrophosphoryl-MurNAc-(pentapeptide)GlcNAc (lipid intermediate II). In Clostridioides difficile (strain 630) (Peptoclostridium difficile), this protein is UDP-N-acetylglucosamine--N-acetylmuramyl-(pentapeptide) pyrophosphoryl-undecaprenol N-acetylglucosamine transferase.